We begin with the raw amino-acid sequence, 546 residues long: Methionine--tRNA ligase (546 aa).

Positions 15 to 25 (PYANGPIHLGH) match the 'HIGH' region motif. Positions 146, 149, 159, and 162 each coordinate Zn(2+). Residues 332–336 (KMSKS) carry the 'KMSKS' region motif. Position 335 (lysine 335) interacts with ATP.

The protein belongs to the class-I aminoacyl-tRNA synthetase family. MetG type 1 subfamily. Monomer. Requires Zn(2+) as cofactor.

It is found in the cytoplasm. The catalysed reaction is tRNA(Met) + L-methionine + ATP = L-methionyl-tRNA(Met) + AMP + diphosphate. Is required not only for elongation of protein synthesis but also for the initiation of all mRNA translation through initiator tRNA(fMet) aminoacylation. The chain is Methionine--tRNA ligase from Coxiella burnetii (strain Dugway 5J108-111).